The primary structure comprises 298 residues: Inosose dehydratase (298 aa).

Belongs to the IolE/MocC family. Glutathione serves as cofactor. The cofactor is Co(2+). Mn(2+) is required as a cofactor.

It catalyses the reaction scyllo-inosose = 3D-3,5/4-trihydroxycyclohexane-1,2-dione + H2O. It participates in polyol metabolism; myo-inositol degradation into acetyl-CoA; acetyl-CoA from myo-inositol: step 2/7. Catalyzes the dehydration of inosose (2-keto-myo-inositol, 2KMI or 2,4,6/3,5-pentahydroxycyclohexanone) to 3D-(3,5/4)-trihydroxycyclohexane-1,2-dione (D-2,3-diketo-4-deoxy-epi-inositol). This is Inosose dehydratase from Bacillus anthracis (strain CDC 684 / NRRL 3495).